Here is a 154-residue protein sequence, read N- to C-terminus: Deoxyuridine 5'-triphosphate nucleotidohydrolase (154 aa).

Residues 64 to 66 (RSG), asparagine 77, 81 to 83 (TVD), and lysine 91 each bind substrate.

The protein belongs to the dUTPase family. In terms of assembly, homotrimer. Mg(2+) serves as cofactor.

It catalyses the reaction dUTP + H2O = dUMP + diphosphate + H(+). Its pathway is pyrimidine metabolism; dUMP biosynthesis; dUMP from dCTP (dUTP route): step 2/2. This enzyme is involved in nucleotide metabolism: it produces dUMP, the immediate precursor of thymidine nucleotides and it decreases the intracellular concentration of dUTP so that uracil cannot be incorporated into DNA. This is Deoxyuridine 5'-triphosphate nucleotidohydrolase from Mycolicibacterium gilvum (strain PYR-GCK) (Mycobacterium gilvum (strain PYR-GCK)).